The chain runs to 843 residues: NADH-quinone oxidoreductase subunit G (843 aa).

The 79-residue stretch at 20–98 (DLVTLTIDGA…GMVVKTQLTS (79 aa)) folds into the 2Fe-2S ferredoxin-type domain. Residues cysteine 54, cysteine 65, cysteine 68, and cysteine 82 each contribute to the [2Fe-2S] cluster site. Residues 100–139 (VAEKAQHGVMELLLINHPLDCPVCDKGGECPLQNQAMSHG) enclose the 4Fe-4S His(Cys)3-ligated-type domain. Residues histidine 116, cysteine 120, cysteine 123, cysteine 129, cysteine 169, cysteine 172, cysteine 175, cysteine 219, cysteine 245, cysteine 248, cysteine 252, and cysteine 280 each contribute to the [4Fe-4S] cluster site. One can recognise a 4Fe-4S Mo/W bis-MGD-type domain in the interval 238 to 294 (LISSPSVCEHCSGGCATRTDHRRGKVMRRLAANEPEVNEEWICDKGRFGFRYAQQRD).

It belongs to the complex I 75 kDa subunit family. [2Fe-2S] cluster is required as a cofactor. It depends on [4Fe-4S] cluster as a cofactor.

It catalyses the reaction a quinone + NADH + 5 H(+)(in) = a quinol + NAD(+) + 4 H(+)(out). In terms of biological role, NDH-1 shuttles electrons from NADH, via FMN and iron-sulfur (Fe-S) centers, to quinones in the respiratory chain. Couples the redox reaction to proton translocation (for every two electrons transferred, four hydrogen ions are translocated across the cytoplasmic membrane), and thus conserves the redox energy in a proton gradient. The chain is NADH-quinone oxidoreductase subunit G (nuoG) from Streptomyces coelicolor (strain ATCC BAA-471 / A3(2) / M145).